The sequence spans 242 residues: Protein CDV3 homolog B (242 aa).

Basic and acidic residues predominate over residues 1–15; that stretch reads MAEPEERSLDDFFAK. The tract at residues 1–242 is disordered; that stretch reads MAEPEERSLD…DNQYAVLGEQ (242 aa). Position 2 is an N-acetylalanine (A2). Residues 30–57 show a composition bias toward low complexity; it reads AAGSRGPARPSDGATSSSLSSYVSAAGK. Basic and acidic residues predominate over residues 59-75; it reads VKKEKSGKSENPDQLQE. Acidic residues predominate over residues 105–122; the sequence is KEDDENENKEEQGADWEE. Polar residues-rich tracts occupy residues 129-143 and 183-194; these read DKSS…QAQA and SDTQFPSPQATA. Over residues 195 to 213 the composition is skewed to basic and acidic residues; it reads KHTESRREKEMEKTFEIVK.

Belongs to the CDV3 family.

Its subcellular location is the cytoplasm. This chain is Protein CDV3 homolog B (cdv3-b), found in Xenopus laevis (African clawed frog).